We begin with the raw amino-acid sequence, 242 residues long: Large ribosomal subunit protein uL1 (242 aa).

It belongs to the universal ribosomal protein uL1 family. As to quaternary structure, part of the 50S ribosomal subunit.

Functionally, binds directly to 23S rRNA. The L1 stalk is quite mobile in the ribosome, and is involved in E site tRNA release. Protein L1 is also a translational repressor protein, it controls the translation of the L11 operon by binding to its mRNA. The chain is Large ribosomal subunit protein uL1 from Dictyoglomus turgidum (strain DSM 6724 / Z-1310).